We begin with the raw amino-acid sequence, 93 residues long: Small ribosomal subunit protein bS16 (93 aa).

The protein belongs to the bacterial ribosomal protein bS16 family.

This chain is Small ribosomal subunit protein bS16, found in Dictyoglomus turgidum (strain DSM 6724 / Z-1310).